We begin with the raw amino-acid sequence, 342 residues long: Phenylalanine--tRNA ligase alpha subunit (342 aa).

E255 provides a ligand contact to Mg(2+).

The protein belongs to the class-II aminoacyl-tRNA synthetase family. Phe-tRNA synthetase alpha subunit type 1 subfamily. In terms of assembly, tetramer of two alpha and two beta subunits. Requires Mg(2+) as cofactor.

It localises to the cytoplasm. It carries out the reaction tRNA(Phe) + L-phenylalanine + ATP = L-phenylalanyl-tRNA(Phe) + AMP + diphosphate + H(+). The protein is Phenylalanine--tRNA ligase alpha subunit of Pelotomaculum thermopropionicum (strain DSM 13744 / JCM 10971 / SI).